The chain runs to 309 residues: uncharacterized protein (309 aa).

Positions 1–60 constitute an HTH lysR-type domain; the sequence is MKPLLDVLMILDALEKEGSFAAASAKLYKTPSALSYTVHKLESDLNIQLLDRSGHRAKFT. A DNA-binding region (H-T-H motif) is located at residues 20–39; it reads FAAASAKLYKTPSALSYTVH.

Belongs to the LysR transcriptional regulatory family.

This is an uncharacterized protein from Escherichia coli (strain K12).